The primary structure comprises 147 residues: MKRMMIVAALAALTTTTVAQAADPAAYVEYRKSVLSATSNYMKAIGITLKEDLAVPNQTADHAKAIASIMETLPAAFPEGTAGIAKTEAKAAIWKDFEAFKVASKKSQDAALELASAAETGDKAAIGAKLQALGGTCKACHKEFKAD.

A signal peptide spans 1–21; that stretch reads MKRMMIVAALAALTTTTVAQA. Residues R31, T87, E88, C137, C140, and H141 each coordinate heme c.

As to quaternary structure, homodimer. In terms of processing, binds 1 heme c group covalently per subunit.

Functionally, cytochrome c' is the most widely occurring bacterial c-type cytochrome. Cytochromes c' are high-spin proteins and the heme has no sixth ligand. Their exact function is not known. The sequence is that of Cytochrome c' from Rhodospirillum rubrum (strain ATCC 11170 / ATH 1.1.1 / DSM 467 / LMG 4362 / NCIMB 8255 / S1).